Here is a 146-residue protein sequence, read N- to C-terminus: Vascular endothelial growth factor isoform GtVF (146 aa).

The N-terminal stretch at 1–24 (MAAYLLAVAILFCIQGWPSGTVQG) is a signal peptide. Q25 is modified (pyrrolidone carboxylic acid). 3 disulfide bridges follow: C38–C80, C69–C115, and C73–C117. A disordered region spans residues 116–146 (ECRPRSRSGVDSGKRKRNPEEGEPRAKFPFV). Residues 133-146 (NPEEGEPRAKFPFV) show a composition bias toward basic and acidic residues.

This sequence belongs to the PDGF/VEGF growth factor family. Snake venom VEGF subfamily. As to quaternary structure, homodimer; disulfide-linked. As to expression, expressed by the venom gland.

It localises to the secreted. Its function is as follows. Snake venom VEGFs that may contribute to venom dispersion and prey subjugation by inducing vascular permeability and hypotension. This protein induces an increase in capillary permeability after intradermal injection, in a VEGFR-2 (KDR) dependent manner. In addition, it provokes a drastic hypotensive effect after intravenous injection. The hypotension is mediated by nitric oxide (NO), which is produced by VEGF-activated endothelium NO synthase. Also induces angiogenesis in vitro. Unlike other crotalid VEGFs, this protein probably interacts with VEGF receptor-2 (KDR). The polypeptide is Vascular endothelial growth factor isoform GtVF (Gloydius tsushimaensis (Tsushima Island pitviper)).